The chain runs to 236 residues: Endonuclease V (236 aa).

2 residues coordinate Mg(2+): D47 and D115.

It belongs to the endonuclease V family. Requires Mg(2+) as cofactor.

It localises to the cytoplasm. It carries out the reaction Endonucleolytic cleavage at apurinic or apyrimidinic sites to products with a 5'-phosphate.. Its function is as follows. DNA repair enzyme involved in the repair of deaminated bases. Selectively cleaves double-stranded DNA at the second phosphodiester bond 3' to a deoxyinosine leaving behind the intact lesion on the nicked DNA. The polypeptide is Endonuclease V (Xanthomonas campestris pv. campestris (strain 8004)).